Here is a 293-residue protein sequence, read N- to C-terminus: Diaminopimelate epimerase (293 aa).

Substrate is bound by residues N17, Q47, and N67. C76 serves as the catalytic Proton donor. Substrate-binding positions include 77-78 (GN), N164, N197, and 215-216 (ER). Residue C224 is the Proton acceptor of the active site. A substrate-binding site is contributed by 225–226 (GS).

This sequence belongs to the diaminopimelate epimerase family. In terms of assembly, homodimer.

The protein resides in the cytoplasm. It catalyses the reaction (2S,6S)-2,6-diaminopimelate = meso-2,6-diaminopimelate. Its pathway is amino-acid biosynthesis; L-lysine biosynthesis via DAP pathway; DL-2,6-diaminopimelate from LL-2,6-diaminopimelate: step 1/1. Functionally, catalyzes the stereoinversion of LL-2,6-diaminopimelate (L,L-DAP) to meso-diaminopimelate (meso-DAP), a precursor of L-lysine and an essential component of the bacterial peptidoglycan. The polypeptide is Diaminopimelate epimerase (Rhodopseudomonas palustris (strain TIE-1)).